The following is a 393-amino-acid chain: Branched-chain amino acid aminotransferase 1, mitochondrial (393 aa).

Residues 1 to 34 (MIHRGLWLHNLVQSYRVGSSSSSSTLFKLVYRYN) constitute a mitochondrion transit peptide. R138 contacts pyridoxal 5'-phosphate. K240 functions as the Proton acceptor in the catalytic mechanism. K240 bears the N6-(pyridoxal phosphate)lysine mark. E276 serves as a coordination point for pyridoxal 5'-phosphate.

The protein belongs to the class-IV pyridoxal-phosphate-dependent aminotransferase family. Pyridoxal 5'-phosphate is required as a cofactor. Expressed specifically in lupulin glands.

It is found in the mitochondrion. It carries out the reaction L-isoleucine + 2-oxoglutarate = (S)-3-methyl-2-oxopentanoate + L-glutamate. The enzyme catalyses L-leucine + 2-oxoglutarate = 4-methyl-2-oxopentanoate + L-glutamate. The catalysed reaction is L-valine + 2-oxoglutarate = 3-methyl-2-oxobutanoate + L-glutamate. Its pathway is amino-acid biosynthesis; L-isoleucine biosynthesis; L-isoleucine from 2-oxobutanoate: step 4/4. The protein operates within amino-acid biosynthesis; L-leucine biosynthesis; L-leucine from 3-methyl-2-oxobutanoate: step 4/4. It functions in the pathway amino-acid biosynthesis; L-valine biosynthesis; L-valine from pyruvate: step 4/4. Functionally, converts 2-oxo acids to branched-chain amino acids (BCAA). Shows no kinetic preferences corresponding to anabolic or catabolic functions, but likely involved in BCAA catabolism. This is Branched-chain amino acid aminotransferase 1, mitochondrial from Humulus lupulus (European hop).